We begin with the raw amino-acid sequence, 293 residues long: Pyridoxal 5'-phosphate synthase subunit PdxS (293 aa).

Residue Asp-23 participates in D-ribose 5-phosphate binding. Residue Lys-80 is the Schiff-base intermediate with D-ribose 5-phosphate of the active site. Gly-152 contacts D-ribose 5-phosphate. D-glyceraldehyde 3-phosphate is bound at residue Arg-164. D-ribose 5-phosphate is bound by residues Gly-213 and 234–235 (GS).

It belongs to the PdxS/SNZ family. In the presence of PdxT, forms a dodecamer of heterodimers.

The catalysed reaction is aldehydo-D-ribose 5-phosphate + D-glyceraldehyde 3-phosphate + L-glutamine = pyridoxal 5'-phosphate + L-glutamate + phosphate + 3 H2O + H(+). It participates in cofactor biosynthesis; pyridoxal 5'-phosphate biosynthesis. Its function is as follows. Catalyzes the formation of pyridoxal 5'-phosphate from ribose 5-phosphate (RBP), glyceraldehyde 3-phosphate (G3P) and ammonia. The ammonia is provided by the PdxT subunit. Can also use ribulose 5-phosphate and dihydroxyacetone phosphate as substrates, resulting from enzyme-catalyzed isomerization of RBP and G3P, respectively. The sequence is that of Pyridoxal 5'-phosphate synthase subunit PdxS from Thermus thermophilus (strain ATCC 27634 / DSM 579 / HB8).